We begin with the raw amino-acid sequence, 386 residues long: Patatin-10 (386 aa).

An N-terminal signal peptide occupies residues 1–23 (MATTKSFLILFFMILATTSSTCA). Residues 32 to 229 (LSIDGGGIKG…TVGDPALLSL (198 aa)) enclose the PNPLA domain. Positions 36-41 (GGGIKG) match the GXGXXG motif. The GXSXG signature appears at 75-79 (GTSTG). The active-site Nucleophile is S77. N115 carries an N-linked (GlcNAc...) asparagine glycan. D215 functions as the Proton acceptor in the catalytic mechanism. Residues 215–217 (DGG) carry the DGA/G motif. Residues 321–384 (ENALTGTTTE…NRKKLRANKA (64 aa)) are a coiled coil.

The protein belongs to the patatin family. In terms of tissue distribution, tuber.

The protein resides in the vacuole. Probable lipolytic acyl hydrolase (LAH), an activity which is thought to be involved in the response of tubers to pathogens. This Solanum tuberosum (Potato) protein is Patatin-10.